A 413-amino-acid chain; its full sequence is Endoplasmic reticulum resident protein 44.2 (413 aa).

The signal sequence occupies residues 1-21; sequence MNLASVLLLLAACHLSVSVNG. The 115-residue stretch at 22-136 folds into the Thioredoxin domain; sequence QEHKEAIELS…LTNFVKFQLS (115 aa). A disulfide bridge links Cys-184 with Cys-233. Asn-264 carries N-linked (GlcNAc...) asparagine glycosylation. The interval 367–413 is disordered; sequence KAARGITDDHEAQAPSTRPIDTTPPPSVFKELKPSDKRYSILQKSEL. Over residues 396-413 the composition is skewed to basic and acidic residues; that stretch reads KELKPSDKRYSILQKSEL. A Prevents secretion from ER motif is present at residues 410-413; the sequence is KSEL.

Its subcellular location is the endoplasmic reticulum lumen. This chain is Endoplasmic reticulum resident protein 44.2, found in Caenorhabditis elegans.